A 76-amino-acid polypeptide reads, in one-letter code: Acyl carrier protein (76 aa).

Residues 1-76 (MATFDDVKDV…AAVDYIDNNQ (76 aa)) enclose the Carrier domain. Residue Ser-36 is modified to O-(pantetheine 4'-phosphoryl)serine.

Belongs to the acyl carrier protein (ACP) family. In terms of processing, 4'-phosphopantetheine is transferred from CoA to a specific serine of apo-ACP by AcpS. This modification is essential for activity because fatty acids are bound in thioester linkage to the sulfhydryl of the prosthetic group.

It is found in the cytoplasm. It participates in lipid metabolism; fatty acid biosynthesis. In terms of biological role, carrier of the growing fatty acid chain in fatty acid biosynthesis. The polypeptide is Acyl carrier protein (Deinococcus radiodurans (strain ATCC 13939 / DSM 20539 / JCM 16871 / CCUG 27074 / LMG 4051 / NBRC 15346 / NCIMB 9279 / VKM B-1422 / R1)).